Reading from the N-terminus, the 376-residue chain is UPF0754 membrane protein SSP0953 (376 aa).

A run of 2 helical transmembrane segments spans residues 4–24 (FLVI…TNVI) and 356–376 (FLGF…AIFV).

Belongs to the UPF0754 family.

The protein localises to the cell membrane. The protein is UPF0754 membrane protein SSP0953 of Staphylococcus saprophyticus subsp. saprophyticus (strain ATCC 15305 / DSM 20229 / NCIMB 8711 / NCTC 7292 / S-41).